Here is a 1976-residue protein sequence, read N- to C-terminus: Myosin-10 (1976 aa).

Omega-N-methylarginine is present on Arg-18. A Myosin N-terminal SH3-like domain is found at 31–81 (TAKKLVWIPSERHGFEAASIKEERGDEVMVELAENGKKAMVNKDDIQKMNP). Residues 85 to 783 (SKVEDMAELT…VLAHLEEERD (699 aa)) enclose the Myosin motor domain. An ATP-binding site is contributed by 178–185 (GESGAGKT). Lys-442 is subject to N6-acetyllysine. The tract at residues 661–683 (LTKLMATLRNTNPNFVRCIIPNH) is actin-binding. In terms of domain architecture, IQ spans 786–815 (ITDIIIFFQAVCRGYLARKAFAKKQQQLSA). Positions 845 to 1976 (LQVTRQEEEL…VNDTQPPQSE (1132 aa)) form a coiled coil. Residues 1125–1175 (EDFESEKASRNKAEKQKRDLSEELEALKTELEDTLDTTAAQQELRTKREQE) are disordered. Positions 1129 to 1155 (SEKASRNKAEKQKRDLSEELEALKTEL) are enriched in basic and acidic residues. At Ser-1145 the chain carries Phosphoserine. 3 positions are modified to N6-acetyllysine: Lys-1241, Lys-1301, and Lys-1645. Disordered stretches follow at residues 1697–1718 (ASSE…DEIA) and 1874–1976 (KANA…PQSE). The span at 1698-1708 (SSERARRHAEQ) shows a compositional bias: basic and acidic residues. Position 1930 is an omega-N-methylarginine (Arg-1930). Ser-1935, Ser-1937, Ser-1938, and Ser-1939 each carry phosphoserine. Arg-1940 carries the omega-N-methylarginine modification. 2 positions are modified to phosphoserine: Ser-1952 and Ser-1956. Thr-1960 carries the phosphothreonine modification. The segment covering 1967 to 1976 (VNDTQPPQSE) has biased composition (polar residues). Ser-1975 is subject to Phosphoserine.

Belongs to the TRAFAC class myosin-kinesin ATPase superfamily. Myosin family. Myosin is a hexameric protein that consists of 2 heavy chain subunits (MHC), 2 alkali light chain subunits (MLC) and 2 regulatory light chain subunits (MLC-2). Interacts with PLEKHG6. Interacts with ECPAS. Interacts with LARP6. Interacts with MCC. Interacts with KIF26B. Interacts with CFAP95. Phosphorylated by ABL2. In newborn kidney, expressed in the mesenchyme and ureteric buds.

Its subcellular location is the cell projection. It localises to the lamellipodium. Involved with LARP6 in the stabilization of type I collagen mRNAs for CO1A1 and CO1A2. During cell spreading, plays an important role in cytoskeleton reorganization, focal contacts formation (in the central part but not the margins of spreading cells), and lamellipodial extension; this function is mechanically antagonized by MYH9. Cellular myosin that appears to play a role in cytokinesis, cell shape, and specialized functions such as secretion and capping. The chain is Myosin-10 (Myh10) from Mus musculus (Mouse).